Reading from the N-terminus, the 305-residue chain is UDP-3-O-acyl-N-acetylglucosamine deacetylase (305 aa).

The Zn(2+) site is built by histidine 79, histidine 238, and aspartate 242. Histidine 265 acts as the Proton donor in catalysis.

Belongs to the LpxC family. It depends on Zn(2+) as a cofactor.

The enzyme catalyses a UDP-3-O-[(3R)-3-hydroxyacyl]-N-acetyl-alpha-D-glucosamine + H2O = a UDP-3-O-[(3R)-3-hydroxyacyl]-alpha-D-glucosamine + acetate. The protein operates within glycolipid biosynthesis; lipid IV(A) biosynthesis; lipid IV(A) from (3R)-3-hydroxytetradecanoyl-[acyl-carrier-protein] and UDP-N-acetyl-alpha-D-glucosamine: step 2/6. Its function is as follows. Catalyzes the hydrolysis of UDP-3-O-myristoyl-N-acetylglucosamine to form UDP-3-O-myristoylglucosamine and acetate, the committed step in lipid A biosynthesis. This is UDP-3-O-acyl-N-acetylglucosamine deacetylase from Histophilus somni (strain 129Pt) (Haemophilus somnus).